We begin with the raw amino-acid sequence, 235 residues long: Ubiquinone/menaquinone biosynthesis C-methyltransferase UbiE (235 aa).

Thr-59, Asp-84, and Ser-123 together coordinate S-adenosyl-L-methionine.

It belongs to the class I-like SAM-binding methyltransferase superfamily. MenG/UbiE family.

It carries out the reaction a 2-demethylmenaquinol + S-adenosyl-L-methionine = a menaquinol + S-adenosyl-L-homocysteine + H(+). The catalysed reaction is a 2-methoxy-6-(all-trans-polyprenyl)benzene-1,4-diol + S-adenosyl-L-methionine = a 5-methoxy-2-methyl-3-(all-trans-polyprenyl)benzene-1,4-diol + S-adenosyl-L-homocysteine + H(+). Its pathway is quinol/quinone metabolism; menaquinone biosynthesis; menaquinol from 1,4-dihydroxy-2-naphthoate: step 2/2. It participates in cofactor biosynthesis; ubiquinone biosynthesis. Methyltransferase required for the conversion of demethylmenaquinol (DMKH2) to menaquinol (MKH2) and the conversion of 2-polyprenyl-6-methoxy-1,4-benzoquinol (DDMQH2) to 2-polyprenyl-3-methyl-6-methoxy-1,4-benzoquinol (DMQH2). The protein is Ubiquinone/menaquinone biosynthesis C-methyltransferase UbiE of Campylobacter jejuni subsp. jejuni serotype O:23/36 (strain 81-176).